Reading from the N-terminus, the 221-residue chain is Histone H1C (221 aa).

Low complexity-rich tracts occupy residues 1–11 (MTETAATETTP) and 27–44 (KKAA…PSAS). Disordered regions lie at residues 1-44 (MTET…PSAS) and 123-221 (AKKK…AAKK). The region spanning 39 to 112 (SGPSASELIV…GASGSFKLNK (74 aa)) is the H15 domain. Basic residues-rich tracts occupy residues 123–150 (AKKK…KPKK) and 158–221 (SPKK…AAKK).

Belongs to the histone H1/H5 family.

The protein localises to the nucleus. Its subcellular location is the chromosome. Histones H1 are necessary for the condensation of nucleosome chains into higher-order structures. The protein is Histone H1C of Xenopus laevis (African clawed frog).